We begin with the raw amino-acid sequence, 109 residues long: Small ribosomal subunit protein uS10 (109 aa).

This sequence belongs to the universal ribosomal protein uS10 family. As to quaternary structure, part of the 30S ribosomal subunit.

In terms of biological role, involved in the binding of tRNA to the ribosomes. This is Small ribosomal subunit protein uS10 from Wolbachia pipientis wMel.